The chain runs to 310 residues: Nodulation protein D 1 (310 aa).

An HTH lysR-type domain is found at 6–63 (LDLNLLVALDALMTERQLTAAARRINLSQPAMSAAIARLRNYFHDDLFVMQGRELILT). Residues 23–42 (LTAAARRINLSQPAMSAAIA) constitute a DNA-binding region (H-T-H motif).

Belongs to the LysR transcriptional regulatory family.

NodD regulates the expression of the nodABCFE genes which encode other nodulation proteins. NodD is also a negative regulator of its own expression. Binds flavonoids as inducers. This Neorhizobium galegae (Rhizobium galegae) protein is Nodulation protein D 1 (nodD1).